Here is a 462-residue protein sequence, read N- to C-terminus: MFKTNVEQNNVPVFGSFESGQDLPEKRMNKESVDPRIAYQLVKDQLIDEGSARQNLATFCQTYMEPEAEQIMAETMEKNAIDKSEYPQTAKLESSCVNMLADLWNVDESEHYMGTSTVGSSEACMLGGMAMKFRWRSAALKNGLDIHAKKPSLVISSGYQVCWEKFCVYWDIELREVPMSEEHLSINTDIIMDYVDEYTIGIVGILGITYTGKFDDIMTLNDLVEDYNNTHDNEVVIHVDGASGAMFTPFVEPGLEWDFRLPNVVSINTSGHKYGLVYPGVGWILWRDKEYLPEELVFDVSYLGGHMPTMAINFSRSASQIIGQYYNFLRFGYEGYRQIHMRTRDGALQLSQAVAETGLFEIYNDGANLPIVCYKLKDDANVAWTLYDLADRLQMKGWQVPAYPLPKEMGNTIIQRYVCRGDLGQNMVTAFKNDLSESIEELNNAHILYHDVNTSKTHGFTH.

Lys-273 is modified (N6-(pyridoxal phosphate)lysine).

The protein belongs to the group II decarboxylase family. Requires pyridoxal 5'-phosphate as cofactor.

It catalyses the reaction L-glutamate + H(+) = 4-aminobutanoate + CO2. Functionally, converts internalized glutamate to GABA and increases the internal pH. Involved in glutamate-dependent acid resistance in gastric fluid. This chain is Glutamate decarboxylase alpha (gadA), found in Listeria monocytogenes serovar 1/2a (strain ATCC BAA-679 / EGD-e).